The primary structure comprises 317 residues: Cytochrome f (317 aa).

Residues 1 to 34 (MKGLKNQIMKKTSLFICTLLFISSIVFHPKITFA) form the signal peptide. Residues Tyr35, Cys55, Cys58, and His59 each contribute to the heme site. A helical transmembrane segment spans residues 284-304 (VIGLIAFFIGVGLTQILLVLK).

Belongs to the cytochrome f family. The 4 large subunits of the cytochrome b6-f complex are cytochrome b6, subunit IV (17 kDa polypeptide, PetD), cytochrome f and the Rieske protein, while the 4 small subunits are PetG, PetL, PetM and PetN. The complex functions as a dimer. Heme is required as a cofactor.

The protein resides in the cellular thylakoid membrane. Its function is as follows. Component of the cytochrome b6-f complex, which mediates electron transfer between photosystem II (PSII) and photosystem I (PSI), cyclic electron flow around PSI, and state transitions. This chain is Cytochrome f, found in Prochlorococcus marinus (strain MIT 9301).